The primary structure comprises 126 residues: Larval cuticle protein 2 (126 aa).

The signal sequence occupies residues 1 to 16 (MFKFVMILAVVGVATA). A Chitin-binding type R&amp;R domain is found at 39 to 100 (ADGFDSSLHT…PSGAWIPTPP (62 aa)).

Its function is as follows. Component of the larval cuticle. This chain is Larval cuticle protein 2 (Lcp2), found in Drosophila melanogaster (Fruit fly).